The primary structure comprises 174 residues: NADH-ubiquinone oxidoreductase chain 6 (174 aa).

A run of 5 helical transmembrane segments spans residues 1 to 21 (MTYV…GFSS), 24 to 44 (SPIY…MIIL), 47 to 67 (GGAY…MVVF), 86 to 106 (FEVL…VLWV), and 151 to 171 (WLVV…IEIT).

Belongs to the complex I subunit 6 family. In terms of assembly, core subunit of respiratory chain NADH dehydrogenase (Complex I) which is composed of 45 different subunits.

It is found in the mitochondrion inner membrane. It carries out the reaction a ubiquinone + NADH + 5 H(+)(in) = a ubiquinol + NAD(+) + 4 H(+)(out). Core subunit of the mitochondrial membrane respiratory chain NADH dehydrogenase (Complex I) which catalyzes electron transfer from NADH through the respiratory chain, using ubiquinone as an electron acceptor. Essential for the catalytic activity and assembly of complex I. This is NADH-ubiquinone oxidoreductase chain 6 (MT-ND6) from Papio hamadryas (Hamadryas baboon).